Reading from the N-terminus, the 169-residue chain is 16S rRNA aminocarboxypropyltransferase (169 aa).

S-adenosyl-L-methionine is bound by residues Thr17, Leu67, Leu90, and Thr109.

This sequence belongs to the TDD superfamily. TSR3 family.

It is found in the cytoplasm. It catalyses the reaction an N(1)-methylpseudouridine in rRNA + S-adenosyl-L-methionine = N(1)-methyl-N(3)-[(3S)-3-amino-3-carboxypropyl]pseudouridine in rRNA + S-methyl-5'-thioadenosine + H(+). In terms of biological role, aminocarboxypropyltransferase that catalyzes the aminocarboxypropyl transfer on pseudouridine corresponding to position 914 in M.jannaschii 16S rRNA. It constitutes the last step in biosynthesis of the hypermodified N1-methyl-N3-(3-amino-3-carboxypropyl) pseudouridine (m1acp3-Psi). The chain is 16S rRNA aminocarboxypropyltransferase from Methanothermobacter thermautotrophicus (strain ATCC 29096 / DSM 1053 / JCM 10044 / NBRC 100330 / Delta H) (Methanobacterium thermoautotrophicum).